The primary structure comprises 61 residues: Large ribosomal subunit protein eL24 (61 aa).

The Zn(2+) site is built by Cys7, Cys10, Cys33, and Cys37. The C4-type zinc-finger motif lies at 7-37 (CSFCGGDIPPATGMMHVRNDGTILWFCSNKC).

The protein belongs to the eukaryotic ribosomal protein eL24 family. In terms of assembly, part of the 50S ribosomal subunit. Forms a cluster with proteins L3 and L14. It depends on Zn(2+) as a cofactor.

Its function is as follows. Binds to the 23S rRNA. This is Large ribosomal subunit protein eL24 from Metallosphaera sedula (strain ATCC 51363 / DSM 5348 / JCM 9185 / NBRC 15509 / TH2).